Here is a 479-residue protein sequence, read N- to C-terminus: MKEKEYRTASAARGGLLFMRDIPGGAFGERVIVKDHRGRRRNGQVIFTSGEVVLVQVFEGTDDLDLERTWVRFLEEPFEIPLSPDVLGRIFDGVGAPRDDRPPMIAPLKRNVNGAPVNPVARAYPQEFIQTGIAAIDGLNSLVRGQKLPIFSGSGLPHNRLAAQIVRQAKLLGEETRFVMVFAAMGVTYSDARFFQEEFENSGVLGKVVMYLNLADDPPIKRLLLPRTALACAEYLAFEQDLHVLVVMTDMTHYAEALREVATAKGDVPSRKGYPGYLYSDLAEIYERAGRIKNRRGSITMVPVVSMPSDDITHPIPDLTGYITEGQIVLSRELHHQGIYPPVNIPPSLSRLMKDGIGKNSTREDHPRVASQLYAAYAKALEVRNLASIIGAEELSPSDRQFLDFAGQFEQRFVKQGEEEDRSIIETLDLAWDLLSLLPQFALTRVTEADLAKYHKWEGDSEREAPKMDSPHEEISEKS.

The segment at 458 to 479 (EGDSEREAPKMDSPHEEISEKS) is disordered.

Belongs to the ATPase alpha/beta chains family.

Produces ATP from ADP in the presence of a proton gradient across the membrane. The V-type beta chain is a regulatory subunit. This Nitrosococcus oceani (strain ATCC 19707 / BCRC 17464 / JCM 30415 / NCIMB 11848 / C-107) protein is V-type ATP synthase beta chain.